A 280-amino-acid polypeptide reads, in one-letter code: Myb family transcription factor PHL11 (280 aa).

Residues 20-80 (RDPKPRLRWT…HLQKYRLGQQ (61 aa)) enclose the HTH myb-type domain. A DNA-binding region (H-T-H motif) is located at residues 51 to 76 (PKSVLKLMGLKGLTLYHLKSHLQKYR). A disordered region spans residues 77 to 98 (LGQQQGKKQNRTEQNKENAGSS). Residues 129-149 (AEAMRHQVDAQQRFQEQLEVQ) form a coiled coil region. The LHEQLE signature appears at 142 to 147 (FQEQLE).

Belongs to the MYB-CC family.

It is found in the nucleus. The sequence is that of Myb family transcription factor PHL11 from Arabidopsis thaliana (Mouse-ear cress).